Here is a 430-residue protein sequence, read N- to C-terminus: Putative glycylpeptide N-tetradecanoyltransferase 2 (430 aa).

Tetradecanoyl-CoA is bound by residues 47–50 (HKFW), 181–183 (LCV), and 189–193 (SKGLA). Leu430 serves as the catalytic Proton acceptor; via carboxylate.

It belongs to the NMT family.

The catalysed reaction is N-terminal glycyl-[protein] + tetradecanoyl-CoA = N-tetradecanoylglycyl-[protein] + CoA + H(+). In terms of biological role, may add a myristoyl group to the N-terminal glycine residue of certain cellular proteins. The protein is Putative glycylpeptide N-tetradecanoyltransferase 2 (NMT2) of Arabidopsis thaliana (Mouse-ear cress).